The sequence spans 417 residues: NADH-quinone oxidoreductase subunit D (417 aa).

The protein belongs to the complex I 49 kDa subunit family. As to quaternary structure, NDH-1 is composed of 14 different subunits. Subunits NuoB, C, D, E, F, and G constitute the peripheral sector of the complex.

It is found in the cell inner membrane. It catalyses the reaction a quinone + NADH + 5 H(+)(in) = a quinol + NAD(+) + 4 H(+)(out). NDH-1 shuttles electrons from NADH, via FMN and iron-sulfur (Fe-S) centers, to quinones in the respiratory chain. The immediate electron acceptor for the enzyme in this species is believed to be ubiquinone. Couples the redox reaction to proton translocation (for every two electrons transferred, four hydrogen ions are translocated across the cytoplasmic membrane), and thus conserves the redox energy in a proton gradient. This is NADH-quinone oxidoreductase subunit D from Paraburkholderia phymatum (strain DSM 17167 / CIP 108236 / LMG 21445 / STM815) (Burkholderia phymatum).